The chain runs to 67 residues: ATP synthase F(0) complex subunit 8 (67 aa).

Residues 8-24 (TWFTTVLASSITLFILM) form a helical membrane-spanning segment. Lysine 54 carries the post-translational modification N6-acetyllysine; alternate. N6-succinyllysine; alternate is present on lysine 54. The residue at position 57 (lysine 57) is an N6-acetyllysine.

Belongs to the ATPase protein 8 family. Component of the ATP synthase complex composed at least of ATP5F1A/subunit alpha, ATP5F1B/subunit beta, ATP5MC1/subunit c (homooctomer), MT-ATP6/subunit a, MT-ATP8/subunit 8, ATP5ME/subunit e, ATP5MF/subunit f, ATP5MG/subunit g, ATP5MK/subunit k, ATP5MJ/subunit j, ATP5F1C/subunit gamma, ATP5F1D/subunit delta, ATP5F1E/subunit epsilon, ATP5PF/subunit F6, ATP5PB/subunit b, ATP5PD/subunit d, ATP5PO/subunit OSCP. ATP synthase complex consists of a soluble F(1) head domain (subunits alpha(3) and beta(3)) - the catalytic core - and a membrane F(0) domain - the membrane proton channel (subunits c, a, 8, e, f, g, k and j). These two domains are linked by a central stalk (subunits gamma, delta, and epsilon) rotating inside the F1 region and a stationary peripheral stalk (subunits F6, b, d, and OSCP). Interacts with PRICKLE3.

It localises to the mitochondrion membrane. Its function is as follows. Subunit 8, of the mitochondrial membrane ATP synthase complex (F(1)F(0) ATP synthase or Complex V) that produces ATP from ADP in the presence of a proton gradient across the membrane which is generated by electron transport complexes of the respiratory chain. ATP synthase complex consist of a soluble F(1) head domain - the catalytic core - and a membrane F(1) domain - the membrane proton channel. These two domains are linked by a central stalk rotating inside the F(1) region and a stationary peripheral stalk. During catalysis, ATP synthesis in the catalytic domain of F(1) is coupled via a rotary mechanism of the central stalk subunits to proton translocation. In vivo, can only synthesize ATP although its ATP hydrolase activity can be activated artificially in vitro. Part of the complex F(0) domain. The sequence is that of ATP synthase F(0) complex subunit 8 from Cricetulus griseus (Chinese hamster).